Reading from the N-terminus, the 437-residue chain is Putative ankyrin repeat protein FPV014 (437 aa).

ANK repeat units follow at residues 32-61 (YGCS…NPDL), 65-94 (STPT…DPDN), 99-128 (ESRT…DAED), 131-160 (RFNC…RINS), 164-195 (GSVY…DVED), 197-226 (LSFS…SVDV), and 230-259 (CGRT…DTSV).

The protein is Putative ankyrin repeat protein FPV014 of Fowlpox virus (strain NVSL) (FPV).